We begin with the raw amino-acid sequence, 469 residues long: Ribulose bisphosphate carboxylase large chain (469 aa).

At K5 the chain carries N6,N6,N6-trimethyllysine. The substrate site is built by N114 and T164. The active-site Proton acceptor is the K166. Substrate is bound at residue K168. K192, D194, and E195 together coordinate Mg(2+). The residue at position 192 (K192) is an N6-carboxylysine. The active-site Proton acceptor is H285. R286, H318, and S370 together coordinate substrate.

This sequence belongs to the RuBisCO large chain family. Type I subfamily. In terms of assembly, heterohexadecamer of 8 large chains and 8 small chains; disulfide-linked. The disulfide link is formed within the large subunit homodimers. Requires Mg(2+) as cofactor. The disulfide bond which can form in the large chain dimeric partners within the hexadecamer appears to be associated with oxidative stress and protein turnover.

It is found in the plastid. The protein resides in the chloroplast. The catalysed reaction is 2 (2R)-3-phosphoglycerate + 2 H(+) = D-ribulose 1,5-bisphosphate + CO2 + H2O. The enzyme catalyses D-ribulose 1,5-bisphosphate + O2 = 2-phosphoglycolate + (2R)-3-phosphoglycerate + 2 H(+). RuBisCO catalyzes two reactions: the carboxylation of D-ribulose 1,5-bisphosphate, the primary event in carbon dioxide fixation, as well as the oxidative fragmentation of the pentose substrate in the photorespiration process. Both reactions occur simultaneously and in competition at the same active site. This is Ribulose bisphosphate carboxylase large chain from Fleroya rubrostipulata (Mitragyna rubrostipulata).